Here is a 239-residue protein sequence, read N- to C-terminus: Transcriptional activatory protein AadR (239 aa).

27-149 serves as a coordination point for a nucleoside 3',5'-cyclic phosphate; it reads ICGELGPADH…FATRELSLAQ (123 aa). In terms of domain architecture, HTH crp-type spans 158 to 231; sequence RSAEEKVAAF…PDGVRVLDPK (74 aa). The H-T-H motif DNA-binding region spans 191 to 210; sequence RQDIADFLGLTIETVSRTFT.

In terms of biological role, transcriptional activator of anaerobic gene expression. For aromatic acid degradation. Also required for the anaerobic degradation of benzoate. The sequence is that of Transcriptional activatory protein AadR (aadR) from Rhodopseudomonas palustris (strain ATCC BAA-98 / CGA009).